A 281-amino-acid polypeptide reads, in one-letter code: 18S rRNA (guanine-N(7))-methyltransferase (281 aa).

Residues 212–231 (LPKGLTESQDADQASESMFT) are compositionally biased toward polar residues. Residues 212–281 (LPKGLTESQD…YTGRKRKPRF (70 aa)) form a disordered region. A compositionally biased stretch (basic and acidic residues) spans 242 to 256 (RDLVKKSREWVLEKK).

It belongs to the class I-like SAM-binding methyltransferase superfamily. BUD23/WBSCR22 family. As to quaternary structure, heterodimer with TRMT112; this heterodimerization is necessary for the metabolic stability and activity of the catalytic subunit BUD23. Interacts with GRIP1. May be ubiquitinated and targeted to degradation in response to pro-inflammatory cytokine signaling.

The protein resides in the nucleus. It localises to the nucleoplasm. It is found in the cytoplasm. The protein localises to the perinuclear region. It carries out the reaction a guanosine in 18S rRNA + S-adenosyl-L-methionine = an N(7)-methylguanosine in 18S rRNA + S-adenosyl-L-homocysteine. Its function is as follows. S-adenosyl-L-methionine-dependent methyltransferase that specifically methylates the N(7) position of a guanine in 18S rRNA. Requires the methyltransferase adapter protein TRM112 for full rRNA methyltransferase activity. Involved in the pre-rRNA processing steps leading to small-subunit rRNA production independently of its RNA-modifying catalytic activity. Important for biogenesis end export of the 40S ribosomal subunit independent on its methyltransferase activity. Locus-specific steroid receptor coactivator. Potentiates transactivation by glucocorticoid (NR3C1), mineralocorticoid (NR3C2), androgen (AR) and progesterone (PGR) receptors. Required for the maintenance of open chromatin at the TSC22D3/GILZ locus to facilitate NR3C1 loading on the response elements. Required for maintenance of dimethylation on histone H3 'Lys-79' (H3K79me2), although direct histone methyltransferase activity is not observed in vitro. This is 18S rRNA (guanine-N(7))-methyltransferase from Mus musculus (Mouse).